Here is a 148-residue protein sequence, read N- to C-terminus: Ubiquitin-conjugating enzyme E2 8 (148 aa).

In terms of domain architecture, UBC core spans M1–M147. The active-site Glycyl thioester intermediate is C85.

It belongs to the ubiquitin-conjugating enzyme family. Interacts with CIP8, CHIP, NLA and XERICO. In terms of tissue distribution, highest expression in young stems, old leaves. Lowest levels in floral buds, anthers and young leaves.

It carries out the reaction S-ubiquitinyl-[E1 ubiquitin-activating enzyme]-L-cysteine + [E2 ubiquitin-conjugating enzyme]-L-cysteine = [E1 ubiquitin-activating enzyme]-L-cysteine + S-ubiquitinyl-[E2 ubiquitin-conjugating enzyme]-L-cysteine.. Its pathway is protein modification; protein ubiquitination. Its function is as follows. Accepts the ubiquitin from the E1 complex and catalyzes its covalent attachment to other proteins. Mediates the selective degradation of short-lived and abnormal proteins. This chain is Ubiquitin-conjugating enzyme E2 8 (UBC8), found in Arabidopsis thaliana (Mouse-ear cress).